The chain runs to 106 residues: Putative protein LRRC37A5P (106 aa).

The chain is Putative protein LRRC37A5P (LRRC37A5P) from Homo sapiens (Human).